A 752-amino-acid polypeptide reads, in one-letter code: Ribosomal RNA large subunit methyltransferase K/L (752 aa).

Residues 53 to 164 enclose the THUMP domain; the sequence is QMYKICLWTR…RDELHISIDL (112 aa).

The protein belongs to the methyltransferase superfamily. RlmKL family.

The protein localises to the cytoplasm. It catalyses the reaction guanosine(2445) in 23S rRNA + S-adenosyl-L-methionine = N(2)-methylguanosine(2445) in 23S rRNA + S-adenosyl-L-homocysteine + H(+). The catalysed reaction is guanosine(2069) in 23S rRNA + S-adenosyl-L-methionine = N(2)-methylguanosine(2069) in 23S rRNA + S-adenosyl-L-homocysteine + H(+). Its function is as follows. Specifically methylates the guanine in position 2445 (m2G2445) and the guanine in position 2069 (m7G2069) of 23S rRNA. This is Ribosomal RNA large subunit methyltransferase K/L from Saccharophagus degradans (strain 2-40 / ATCC 43961 / DSM 17024).